The primary structure comprises 110 residues: Nucleotide-binding protein HI1146 homolog (110 aa).

Belongs to the RapZ-like family.

In terms of biological role, displays ATPase and GTPase activities. In Aggregatibacter actinomycetemcomitans (Actinobacillus actinomycetemcomitans), this protein is Nucleotide-binding protein HI1146 homolog.